Here is a 142-residue protein sequence, read N- to C-terminus: Baculoviral IAP repeat-containing protein 5 (142 aa).

The stretch at arginine 18–serine 88 is one BIR repeat. The residue at position 20 (serine 20) is a Phosphoserine; by AURKC. N6-acetyllysine is present on lysine 23. The residue at position 34 (threonine 34) is a Phosphothreonine; by CDK1 and CDK15. The residue at position 48 (threonine 48) is a Phosphothreonine. Zn(2+)-binding residues include cysteine 57, cysteine 60, histidine 77, and cysteine 84. Residues lysine 90, lysine 110, lysine 112, and lysine 115 each carry the N6-acetyllysine modification. Position 117 is a phosphothreonine; by AURKB (threonine 117). At lysine 129 the chain carries N6-acetyllysine.

The protein belongs to the IAP family. In terms of assembly, monomer or homodimer. Exists as a homodimer in the apo state and as a monomer in the CPC-bound state. The monomer protects cells against apoptosis more efficiently than the dimer. Only the dimeric form is capable of enhancing tubulin stability in cells. When phosphorylated, interacts with LAMTOR5/HBXIP; the resulting complex binds pro-CASP9, as well as active CASP9, but much less efficiently. Component of the chromosomal passenger complex (CPC) composed of at least BIRC5/survivin, CDCA8/borealin, INCENP, AURKB or AURKC; in the complex forms a triple-helix bundle-based subcomplex with INCENP and CDCA8. Interacts with JTB. Interacts (via BIR domain) with histone H3 phosphorylated at 'Thr-3' (H3pT3). Interacts with EVI5. Interacts with GTP-bound RAN in both the S and M phases of the cell cycle. Interacts with USP9X. Interacts with tubulin. Interacts with BIRC2/c-IAP1. The acetylated form at Lys-129 interacts with STAT3. The monomeric form deacetylated at Lys-129 interacts with XPO1/CRM1. The monomeric form interacts with XIAP/BIRC4. Both the dimeric and monomeric form can interact with DIABLO/SMAC. Interacts with BIRC6/bruce. Interacts with FBXL7; this interaction facilitates the polyubiquitination and subsequent proteasomal degradation of BIRC5 by the SCF(FBXL7) E3 ubiquitin-protein ligase complex. Post-translationally, ubiquitinated by the Cul9-RING ubiquitin-protein ligase complex, leading to its degradation. Ubiquitination is required for centrosomal targeting. Deubiquitinated by USP35 or USP38; leading to stabilization. In terms of processing, acetylation at Lys-129 results in its homodimerization, while deacetylation promotes the formation of monomers which heterodimerize with XPO1/CRM1 which facilitates its nuclear export. The acetylated form represses STAT3 transactivation. The dynamic equilibrium between its acetylation and deacetylation at Lys-129 determines its interaction with XPO1/CRM1, its subsequent subcellular localization, and its ability to inhibit STAT3 transactivation. In vitro phosphorylation at Thr-117 by AURKB prevents interaction with INCENP and localization to mitotic chromosomes. Phosphorylation at Thr-48 by CK2 is critical for its mitotic and anti-apoptotic activities. Phosphorylation at Thr-34 by CDK15 is critical for its anti-apoptotic activity. Phosphorylation at Ser-20 by AURKC is critical for regulation of proper chromosome alignment and segregation, and possibly cytokinesis.

Its subcellular location is the cytoplasm. It localises to the nucleus. It is found in the chromosome. The protein resides in the centromere. The protein localises to the cytoskeleton. Its subcellular location is the spindle. It localises to the kinetochore. It is found in the midbody. Multitasking protein that has dual roles in promoting cell proliferation and preventing apoptosis. Component of a chromosome passage protein complex (CPC) which is essential for chromosome alignment and segregation during mitosis and cytokinesis. Acts as an important regulator of the localization of this complex; directs CPC movement to different locations from the inner centromere during prometaphase to midbody during cytokinesis and participates in the organization of the center spindle by associating with polymerized microtubules. Involved in the recruitment of CPC to centromeres during early mitosis via association with histone H3 phosphorylated at 'Thr-3' (H3pT3) during mitosis. The complex with RAN plays a role in mitotic spindle formation by serving as a physical scaffold to help deliver the RAN effector molecule TPX2 to microtubules. May counteract a default induction of apoptosis in G2/M phase. The acetylated form represses STAT3 transactivation of target gene promoters. May play a role in neoplasia. Inhibitor of CASP3 and CASP7. Essential for the maintenance of mitochondrial integrity and function. In Felis catus (Cat), this protein is Baculoviral IAP repeat-containing protein 5 (BIRC5).